A 185-amino-acid polypeptide reads, in one-letter code: ATP-dependent protease subunit HslV (185 aa).

Residue threonine 12 is part of the active site. Positions 168, 171, and 174 each coordinate Na(+).

This sequence belongs to the peptidase T1B family. HslV subfamily. In terms of assembly, a double ring-shaped homohexamer of HslV is capped on each side by a ring-shaped HslU homohexamer. The assembly of the HslU/HslV complex is dependent on binding of ATP.

Its subcellular location is the cytoplasm. It carries out the reaction ATP-dependent cleavage of peptide bonds with broad specificity.. Allosterically activated by HslU binding. Protease subunit of a proteasome-like degradation complex believed to be a general protein degrading machinery. The polypeptide is ATP-dependent protease subunit HslV (Dinoroseobacter shibae (strain DSM 16493 / NCIMB 14021 / DFL 12)).